Consider the following 319-residue polypeptide: NH(3)-dependent NAD(+) synthetase (319 aa).

33-40 (GLSGGIDS) serves as a coordination point for ATP. Asp-39 contributes to the Mg(2+) binding site. Arg-169 contributes to the deamido-NAD(+) binding site. ATP is bound at residue Thr-189. Glu-194 lines the Mg(2+) pocket. Deamido-NAD(+) is bound by residues Lys-202 and Asp-209. ATP-binding residues include Lys-218 and Thr-240.

The protein belongs to the NAD synthetase family. In terms of assembly, homodimer.

It carries out the reaction deamido-NAD(+) + NH4(+) + ATP = AMP + diphosphate + NAD(+) + H(+). It participates in cofactor biosynthesis; NAD(+) biosynthesis; NAD(+) from deamido-NAD(+) (ammonia route): step 1/1. Catalyzes the ATP-dependent amidation of deamido-NAD to form NAD. Uses ammonia as a nitrogen source. The polypeptide is NH(3)-dependent NAD(+) synthetase (Mesorhizobium japonicum (strain LMG 29417 / CECT 9101 / MAFF 303099) (Mesorhizobium loti (strain MAFF 303099))).